The primary structure comprises 960 residues: Leucine--tRNA ligase (960 aa).

The 'HIGH' region motif lies at 71–82 (PYPSGAGLHVGH). The 'KMSKS' region signature appears at 729-733 (KMGKS). Lys732 contacts ATP.

The protein belongs to the class-I aminoacyl-tRNA synthetase family.

The protein resides in the cytoplasm. It catalyses the reaction tRNA(Leu) + L-leucine + ATP = L-leucyl-tRNA(Leu) + AMP + diphosphate. The protein is Leucine--tRNA ligase of Corynebacterium diphtheriae (strain ATCC 700971 / NCTC 13129 / Biotype gravis).